The chain runs to 199 residues: NAD(P)H dehydrogenase (quinone) (199 aa).

Positions 4–190 (ILVLYYSTYG…DGARFQGRHV (187 aa)) constitute a Flavodoxin-like domain. FMN is bound by residues 10-15 (STYGHI) and 78-80 (TRF). Residue Y12 coordinates NAD(+). W98 contributes to the substrate binding site. Residues 113-119 (STATQHG) and H134 each bind FMN.

It belongs to the WrbA family. It depends on FMN as a cofactor.

It catalyses the reaction a quinone + NADH + H(+) = a quinol + NAD(+). The enzyme catalyses a quinone + NADPH + H(+) = a quinol + NADP(+). This chain is NAD(P)H dehydrogenase (quinone), found in Rhizorhabdus wittichii (strain DSM 6014 / CCUG 31198 / JCM 15750 / NBRC 105917 / EY 4224 / RW1) (Sphingomonas wittichii).